The sequence spans 1362 residues: DNA-directed RNA polymerase subunit beta (1362 aa).

The protein belongs to the RNA polymerase beta chain family. The RNAP catalytic core consists of 2 alpha, 1 beta, 1 beta' and 1 omega subunit. When a sigma factor is associated with the core the holoenzyme is formed, which can initiate transcription.

It catalyses the reaction RNA(n) + a ribonucleoside 5'-triphosphate = RNA(n+1) + diphosphate. In terms of biological role, DNA-dependent RNA polymerase catalyzes the transcription of DNA into RNA using the four ribonucleoside triphosphates as substrates. The sequence is that of DNA-directed RNA polymerase subunit beta from Acinetobacter baylyi (strain ATCC 33305 / BD413 / ADP1).